We begin with the raw amino-acid sequence, 614 residues long: uncharacterized protein (614 aa).

4 consecutive transmembrane segments (helical) span residues 41-61 (GWIF…AVLF), 87-107 (LIGM…ASAV), 157-177 (DTVL…ITSG), and 178-198 (VVLV…IILF). The region spanning 43 to 330 (IFLLAILTVG…IMWESARLFE (288 aa)) is the ABC transmembrane type-1 domain. Residues 364–603 (IKFNDITFAY…NGLYAKLWNH (240 aa)) form the ABC transporter domain. Residue 397-404 (GRSGAGKS) coordinates ATP.

This sequence belongs to the ABC transporter superfamily.

Its subcellular location is the cell membrane. This is an uncharacterized protein from Haemophilus influenzae (strain ATCC 51907 / DSM 11121 / KW20 / Rd).